We begin with the raw amino-acid sequence, 432 residues long: 3-phosphoshikimate 1-carboxyvinyltransferase (432 aa).

Residues K21, S22, and R26 each contribute to the 3-phosphoshikimate site. K21 serves as a coordination point for phosphoenolpyruvate. Residues G93 and R121 each coordinate phosphoenolpyruvate. The 3-phosphoshikimate site is built by S166, Q168, D318, and K345. Q168 is a binding site for phosphoenolpyruvate. Residue D318 is the Proton acceptor of the active site. The phosphoenolpyruvate site is built by R349 and R391.

The protein belongs to the EPSP synthase family. As to quaternary structure, monomer.

It localises to the cytoplasm. The enzyme catalyses 3-phosphoshikimate + phosphoenolpyruvate = 5-O-(1-carboxyvinyl)-3-phosphoshikimate + phosphate. The protein operates within metabolic intermediate biosynthesis; chorismate biosynthesis; chorismate from D-erythrose 4-phosphate and phosphoenolpyruvate: step 6/7. Functionally, catalyzes the transfer of the enolpyruvyl moiety of phosphoenolpyruvate (PEP) to the 5-hydroxyl of shikimate-3-phosphate (S3P) to produce enolpyruvyl shikimate-3-phosphate and inorganic phosphate. The protein is 3-phosphoshikimate 1-carboxyvinyltransferase of Persephonella marina (strain DSM 14350 / EX-H1).